A 290-amino-acid chain; its full sequence is Bifunctional protein FolD 3 (290 aa).

Residues 163 to 165 (GHS) and isoleucine 229 contribute to the NADP(+) site.

This sequence belongs to the tetrahydrofolate dehydrogenase/cyclohydrolase family. As to quaternary structure, homodimer.

The enzyme catalyses (6R)-5,10-methylene-5,6,7,8-tetrahydrofolate + NADP(+) = (6R)-5,10-methenyltetrahydrofolate + NADPH. It carries out the reaction (6R)-5,10-methenyltetrahydrofolate + H2O = (6R)-10-formyltetrahydrofolate + H(+). Its pathway is one-carbon metabolism; tetrahydrofolate interconversion. Functionally, catalyzes the oxidation of 5,10-methylenetetrahydrofolate to 5,10-methenyltetrahydrofolate and then the hydrolysis of 5,10-methenyltetrahydrofolate to 10-formyltetrahydrofolate. In Roseobacter denitrificans (strain ATCC 33942 / OCh 114) (Erythrobacter sp. (strain OCh 114)), this protein is Bifunctional protein FolD 3.